Here is a 173-residue protein sequence, read N- to C-terminus: Translation initiation factor IF-3 (173 aa).

Belongs to the IF-3 family. Monomer.

It localises to the cytoplasm. Functionally, IF-3 binds to the 30S ribosomal subunit and shifts the equilibrium between 70S ribosomes and their 50S and 30S subunits in favor of the free subunits, thus enhancing the availability of 30S subunits on which protein synthesis initiation begins. In Bacillus subtilis (strain 168), this protein is Translation initiation factor IF-3.